The following is a 340-amino-acid chain: Phosphoribosylformylglycinamidine cyclo-ligase (340 aa).

This sequence belongs to the AIR synthase family.

It is found in the cytoplasm. The enzyme catalyses 2-formamido-N(1)-(5-O-phospho-beta-D-ribosyl)acetamidine + ATP = 5-amino-1-(5-phospho-beta-D-ribosyl)imidazole + ADP + phosphate + H(+). It functions in the pathway purine metabolism; IMP biosynthesis via de novo pathway; 5-amino-1-(5-phospho-D-ribosyl)imidazole from N(2)-formyl-N(1)-(5-phospho-D-ribosyl)glycinamide: step 2/2. The polypeptide is Phosphoribosylformylglycinamidine cyclo-ligase (Streptococcus pneumoniae (strain CGSP14)).